The sequence spans 127 residues: Phosphoribosyl-ATP pyrophosphatase (127 aa).

It belongs to the PRA-PH family.

Its subcellular location is the cytoplasm. It carries out the reaction 1-(5-phospho-beta-D-ribosyl)-ATP + H2O = 1-(5-phospho-beta-D-ribosyl)-5'-AMP + diphosphate + H(+). It participates in amino-acid biosynthesis; L-histidine biosynthesis; L-histidine from 5-phospho-alpha-D-ribose 1-diphosphate: step 2/9. The sequence is that of Phosphoribosyl-ATP pyrophosphatase from Polaromonas sp. (strain JS666 / ATCC BAA-500).